A 120-amino-acid chain; its full sequence is BolA-like protein 2 (120 aa).

The protein belongs to the BolA/IbaG family. As to quaternary structure, interacts with FRA1, GRX3 and GRX4.

It localises to the cytoplasm. The protein localises to the nucleus. Its function is as follows. Involved in the regulation of the iron regulon in response to decreased mitochondrial iron-sulfur cluster synthesis. May be involved in mitochondrial organization and biogenesis. This Saccharomyces cerevisiae (strain ATCC 204508 / S288c) (Baker's yeast) protein is BolA-like protein 2 (BOL2).